The following is a 528-amino-acid chain: Autophagy-related protein 22 (528 aa).

Residues 1 to 98 (MSYGTINDMN…IFVDTSSFAL (98 aa)) lie on the Cytoplasmic side of the membrane. Residues 99-119 (YVFSLSVLFQTIIVISVSGIV) form a helical membrane-spanning segment. Topologically, residues 120–130 (DLWGSVKFKGR) are vacuolar. The chain crosses the membrane as a helical span at residues 131 to 151 (ILVWFGIVGALSTVAISKLND). Residues 152-153 (TQ) are Cytoplasmic-facing. The helical transmembrane segment at 154–174 (IYSLAGLYIVANGCFGVINVV) threads the bilayer. At 175 to 210 (GNSLLPIFVKDSLKCQSQGAYEPDKVDSLTTVISGR) the chain is on the vacuolar side. Residues 211–231 (GASLGYSSALIVQIVSMFLVA) form a helical membrane-spanning segment. Topologically, residues 232 to 241 (SKKGSKQDVQ) are cytoplasmic. A helical membrane pass occupies residues 242 to 262 (VAVLFVGIWWFVWQLPMIWLI). The Vacuolar portion of the chain corresponds to 263 to 318 (DDVTIPIRVDDSTLASARSPYPGEQDALGQLNWKNYLSYGWVSLFESFKHARLLKD). Phosphoserine is present on S278. Residues 319–339 (VMIFLIAWFIISDSITTINST) traverse the membrane as a helical segment. Topologically, residues 340–352 (AVLFSKAELHMST) are cytoplasmic. The helical transmembrane segment at 353-373 (LNLIMISVLTVVNAMLGAFMI) threads the bilayer. Residues 374-388 (PQFLATKFRWTSSQT) lie on the Vacuolar side of the membrane. Residues 389 to 409 (LMYIIIWASFIPFYGILGFFF) form a helical membrane-spanning segment. Over 410-417 (NAFGLKHK) the chain is Cytoplasmic. Residues 418-438 (FEMFLLAIWYGLSLGGLSAVS) form a helical membrane-spanning segment. The Vacuolar segment spans residues 439–485 (RSVFSLIVPPGKESTFFSMFSITDKGSSILGPFLVGLLTDKTHNIRY). The chain crosses the membrane as a helical span at residues 486 to 506 (SFYFFFLLLMLSLPVLNCLDV). The Cytoplasmic segment spans residues 507–528 (KRGRREAEELSQVLPESERRLD).

It belongs to the ATG22 family.

The protein resides in the vacuole membrane. Its function is as follows. Vacuolar effluxer which mediate the efflux of leucine and other amino acids resulting from autophagic degradation. The release of autophagic amino acids allows the maintenance of protein synthesis and viability during nitrogen starvation. This Saccharomyces cerevisiae (strain ATCC 204508 / S288c) (Baker's yeast) protein is Autophagy-related protein 22 (ATG22).